The chain runs to 278 residues: Large ribosomal subunit protein uL2 (278 aa).

Disordered stretches follow at residues 29–55 (PEKS…RHQG) and 225–278 (VMNP…NKKR). Positions 258-278 (RSNKKASNKYIVRRRTKNKKR) are enriched in basic residues.

This sequence belongs to the universal ribosomal protein uL2 family. Part of the 50S ribosomal subunit. Forms a bridge to the 30S subunit in the 70S ribosome. In terms of processing, the N-terminus is blocked. Phosphorylated on serine and threonine residues.

One of the primary rRNA binding proteins. Required for association of the 30S and 50S subunits to form the 70S ribosome, for tRNA binding and peptide bond formation. It has been suggested to have peptidyltransferase activity; this is somewhat controversial. Makes several contacts with the 16S rRNA in the 70S ribosome. This chain is Large ribosomal subunit protein uL2, found in Streptomyces collinus.